The chain runs to 859 residues: Protein O-mannosyl-transferase Tmtc1 (859 aa).

The Cytoplasmic portion of the chain corresponds to 1–22 (MHTPKCRRPSMSATLSHKDLAG). The helical transmembrane segment at 23–43 (LAGCSALAFVLYLNTLNAGFV) threads the bilayer. The Extracellular segment spans residues 44–103 (YDDRRAILANGDVTGARPLANLLRNDFWGTPLVDSGSHGSWRPLCVLSFRLNYLAGGMTP). A helical membrane pass occupies residues 104-124 (LGYHLVNVMLHCVATWLVFLV). Over 125–134 (ARTLLPSRMG) the chain is Cytoplasmic. Transmembrane regions (helical) follow at residues 135-154 (VLAA…AVAG) and 155-174 (LVGR…YLSY). The Cytoplasmic portion of the chain corresponds to 175 to 189 (RRHMLNREWGSLILT). The helical transmembrane segment at 190–210 (IMLALAALLCKETAITALLLC) threads the bilayer. The Extracellular portion of the chain corresponds to 211–245 (GLCDVLSPVGRENSDKVCDGSISGLASFNFQRRFR). A helical membrane pass occupies residues 246 to 266 (SLSILGFTLLCGLYCRLSLLP). Residues 267–288 (RPSTAFSAADNPTAHESCFWTR) are Cytoplasmic-facing. Residues 289–309 (TLTFLYLPVANFGILLWPQEL) form a helical membrane-spanning segment. At 310–328 (SFDWGMEAVSRIRTLWDAR) the chain is on the extracellular side. Residues 329–349 (NILTAGFYGSLVAILWKGSGL) form a helical membrane-spanning segment. Residues 350–422 (RSAASPMDFA…SWTAAPILGT (73 aa)) are Cytoplasmic-facing. Residues 423–443 (AFLVLPFLPASNLLFYVGFVM) form a helical membrane-spanning segment. Topologically, residues 444–446 (AER) are extracellular. A helical transmembrane segment spans residues 447-467 (VLYLPSVGYCLLFGLGFGHLW). The Cytoplasmic portion of the chain corresponds to 468-473 (QRVNSS). A helical membrane pass occupies residues 474 to 493 (WRSRLMLLCGLALLLGVHGV). Topologically, residues 494–859 (RTFRRNLDWR…RMNVHKHENE (366 aa)) are extracellular. TPR repeat units follow at residues 518–551 (PKAL…RPTM), 552–585 (ADAH…RPQL), 586–620 (AVAY…EGSG), 632–665 (YTCY…LPLL), 671–704 (AVLH…QPEQ), 705–739 (GAAY…APLE), 740–773 (PSSH…APQD), 774–807 (YTLQ…QPMA), and 808–841 (AHAH…QPGH). N567 carries N-linked (GlcNAc...) asparagine glycosylation. N718 is a glycosylation site (N-linked (GlcNAc...) asparagine).

This sequence belongs to the TMTC family.

Its subcellular location is the membrane. The protein localises to the endoplasmic reticulum. The catalysed reaction is a di-trans,poly-cis-dolichyl beta-D-mannosyl phosphate + L-seryl-[protein] = 3-O-(alpha-D-mannosyl)-L-seryl-[protein] + a di-trans,poly-cis-dolichyl phosphate + H(+). It carries out the reaction a di-trans,poly-cis-dolichyl beta-D-mannosyl phosphate + L-threonyl-[protein] = 3-O-(alpha-D-mannosyl)-L-threonyl-[protein] + a di-trans,poly-cis-dolichyl phosphate + H(+). It functions in the pathway protein modification; protein glycosylation. Transfers mannosyl residues to the hydroxyl group of serine or threonine residues. The sequence is that of Protein O-mannosyl-transferase Tmtc1 from Drosophila melanogaster (Fruit fly).